The chain runs to 478 residues: MRFLDGHTPAYDLTYNDVFVVPGRSDVASRFDVDLSTVDGSGTTIPVVVANMTAVAGRRMAETVARRGGIVVLPQDLPITAVSETVDFVKSRDLVVDTPVTLSPEDSVSDANALLHKRAHGAAVVVFEGRPIGLVTEANCAGVDRFARVRDIALSDFVTAPVGTDPREVFDLLEHAPIDVAVMTAPDGTLAGVLTRTGAIRAGIYTPAVDAKGRLRIAAAVGINGDVGAKAQALAEAGADLLVIDTAHGHQAKMLDAIKAVASLDLGLPLVAGNVVSAEGTRDLIEAGASIVKVGVGPGAMCTTRMMTGVGRPQFSAVVECAAAARQLGGHVWADGGVRHPRDVALALAAGASNVMIGSWFAGTYESPGDLLFDRDDRPYKESYGMASKRAVAARTAGDSSFDRARKGLFEEGISTSRMSLDPARGGVEDLLDHITSGVRSTCTYVGAANLPELHEKVVLGVQSAAGFAEGHPLPAGW.

CBS domains follow at residues 95 to 152 and 153 to 211; these read VVDT…VRDI and ALSD…AVDA. NADP(+) contacts are provided by residues 245 to 247 and 295 to 297; these read DTA and GVG. Cys-302 functions as the Thioimidate intermediate in the catalytic mechanism.

It belongs to the IMPDH/GMPR family. GuaB1 subfamily. As to quaternary structure, homooctamer composed of two tetramers. The oligomerization state is regulated by ligands and pH. It depends on a monovalent cation as a cofactor.

It carries out the reaction IMP + NH4(+) + NADP(+) = GMP + NADPH + 2 H(+). Its pathway is purine metabolism; IMP biosynthesis via salvage pathway. Its activity is regulated as follows. Activity is allosterically regulated by the ATP/GTP ratio in a pH-dependent manner. At pH 7.8, GTP has only a minor positive effect and ATP only a minor negative effect on the activity, however, at lower pH values, the effects of ATP and GTP increase. ATP-dependent inhibition can be restored by increasing GTP concentration. IMP and XMP are competitive inhibitors. Involved in the purine-salvage pathway. Catalyzes the NADPH-dependent conversion of GMP to IMP. Is not essential for viability, but may contribute to the regulation of the purine nucleotide pool by recycling GMP to IMP. The protein is GMP reductase of Mycolicibacterium smegmatis (strain ATCC 700084 / mc(2)155) (Mycobacterium smegmatis).